Reading from the N-terminus, the 244-residue chain is Mitophagy receptor atg43 (244 aa).

The disordered stretch occupies residues 1-24; the sequence is MSSESKGIPIPRSDSNKTSDVSSW. Topologically, residues 1–198 are cytoplasmic; sequence MSSESKGIPI…LVALITLRDH (198 aa). Positions 28–31 match the atg8 interacting motif (AIM) motif; that stretch reads YELI. Residues 105–131 form a disordered region; sequence SLSLLQSKEEDDSSNWETEDSESAVEE. Residues 113 to 131 are compositionally biased toward acidic residues; it reads EEDDSSNWETEDSESAVEE. Residues 165–184 form an involved in MIM complex binding. Required for normal vegetative cell population growth but is dispensable for mitophagy region; sequence PPIPDLRFQQSYLQSIQRAN. Residues 199–215 traverse the membrane as a helical segment; it reads VLYPFLSGGMWVFVRHI. The Mitochondrial intermembrane portion of the chain corresponds to 216 to 244; sequence FQFLKLQEKGFHFGQSLRRNLGLFSTFKD.

Interacts (via N-terminal atg8 interacting motif) with atg8; the interaction is direct. Interacts with the mitochondrial outer import machinery (MIM) complex subunits mim1 and mim2.

The protein resides in the mitochondrion outer membrane. In terms of biological role, mitophagy receptor that tethers atg8 to the mitochondrial outer membrane to promote selective autophagy. This Schizosaccharomyces pombe (strain 972 / ATCC 24843) (Fission yeast) protein is Mitophagy receptor atg43.